Here is a 175-residue protein sequence, read N- to C-terminus: ATP-dependent protease subunit HslV (175 aa).

Residue Thr2 is part of the active site. Ala159, Asp162, and Thr165 together coordinate Na(+).

It belongs to the peptidase T1B family. HslV subfamily. As to quaternary structure, a double ring-shaped homohexamer of HslV is capped on each side by a ring-shaped HslU homohexamer. The assembly of the HslU/HslV complex is dependent on binding of ATP.

It localises to the cytoplasm. The catalysed reaction is ATP-dependent cleavage of peptide bonds with broad specificity.. With respect to regulation, allosterically activated by HslU binding. Functionally, protease subunit of a proteasome-like degradation complex believed to be a general protein degrading machinery. The polypeptide is ATP-dependent protease subunit HslV (Ligilactobacillus salivarius (strain UCC118) (Lactobacillus salivarius)).